The sequence spans 316 residues: Polyprenyl transferase prhE (316 aa).

Helical transmembrane passes span 45–65, 69–89, 114–134, 135–155, 163–183, 188–208, 231–253, 257–276, and 296–316; these read VVGVAYTAAISPVTLPSTFLL, VILSLWGFCIRSAGCAWNDLI, GAALLAAFMFGCGGSLLLLLP, SQCAFEAAIVVFFALLYPFGK, LILTNIAWAIPMAMSSLDMSP, IPTLAMSFSIASVIVMIDIVY, ITDQIAYGLFFSGTLSLLVGGIL, GFPFLIFSVGGHFLGFLRFL, and SCLLATMLLVFGLCFEYCVRL.

The protein belongs to the UbiA prenyltransferase family. It depends on Mg(2+) as a cofactor.

It localises to the membrane. The enzyme catalyses 3,5-dimethylorsellinate + (2E,6E)-farnesyl diphosphate = (3R)-3-farnesyl-6-hydroxy-2,3,5-trimethyl-4-oxocyclohexa-1,5-diene-1-carboxylate + diphosphate + H(+). The protein operates within secondary metabolite biosynthesis; terpenoid biosynthesis. Its function is as follows. Polyprenyl transferase; part of the gene cluster that mediates the biosynthesis of paraherquonin, a meroterpenoid with a unique, highly congested hexacyclic molecular architecture. The first step of the pathway is the synthesis of 3,5-dimethylorsellinic acid (DMOA) by the polyketide synthase prhL. Synthesis of DMOA is followed by farnesylation by the prenyltransferase prhE, methylesterification by the methyl-transferase prhM, epoxidation of the prenyl chain by the flavin-dependent monooxygenase prhF, and cyclization of the farnesyl moiety by the terpene cyclase prhH, to yield the tetracyclic intermediate, protoaustinoid A. The short chain dehydrogenase prhI then oxidizes the C-3 alcohol group of the terpene cyclase product to transform protoaustinoid A into protoaustinoid B. The FAD-binding monooxygenase prhJ catalyzes the oxidation of protoaustinoid B into preaustinoid A which is further oxidized into preaustinoid A1 by FAD-binding monooxygenase phrK. Finally, prhA leads to berkeleydione via the berkeleyone B intermediate. PrhA is a multifunctional dioxygenase that first desaturates at C5-C6 to form berkeleyone B, followed by rearrangement of the A/B-ring to form the cycloheptadiene moiety in berkeleydione. Berkeleydione serves as the key intermediate for the biosynthesis of paraherquonin as well as many other meroterpenoids. The cytochrome P450 monooxygenases prhB, prhD, and prhN, as well as the isomerase prhC, are probably involved in the late stage of paraherquonin biosynthesis, after the production of berkeleydione. Especially prhC might be a multifunctional enzyme that catalyzes the D-ring expansion via intramolecular methoxy rearrangement, as well as the hydrolysis of the expanded D-ring. The sequence is that of Polyprenyl transferase prhE from Penicillium brasilianum.